We begin with the raw amino-acid sequence, 838 residues long: Protein translocase subunit SecA 1 (838 aa).

ATP is bound by residues glutamine 85, 103-107 (GEGKT), and aspartate 493. Residues cysteine 823, cysteine 825, cysteine 834, and histidine 835 each coordinate Zn(2+).

This sequence belongs to the SecA family. In terms of assembly, monomer and homodimer. Part of the essential Sec protein translocation apparatus which comprises SecA, SecYEG and auxiliary proteins SecDF. Other proteins may also be involved. It depends on Zn(2+) as a cofactor.

It is found in the cell membrane. It localises to the cytoplasm. It catalyses the reaction ATP + H2O + cellular proteinSide 1 = ADP + phosphate + cellular proteinSide 2.. Its function is as follows. Part of the Sec protein translocase complex. Interacts with the SecYEG preprotein conducting channel. Has a central role in coupling the hydrolysis of ATP to the transfer of proteins into and across the cell membrane, serving as an ATP-driven molecular motor driving the stepwise translocation of polypeptide chains across the membrane. This Streptococcus gordonii protein is Protein translocase subunit SecA 1.